A 545-amino-acid polypeptide reads, in one-letter code: Zinc finger protein 697 (545 aa).

The segment at 1-143 (MKQEDNQGVC…EQPAPPVLPW (143 aa)) is disordered. A Glycyl lysine isopeptide (Lys-Gly) (interchain with G-Cter in SUMO2) cross-link involves residue lysine 2. The span at 23–36 (DFEDSEDREGDPEE) shows a compositional bias: acidic residues. Residues 45-55 (DTNKREGHPEP) show a composition bias toward basic and acidic residues. 2 stretches are compositionally biased toward acidic residues: residues 79–94 (LSEEEGVSVRGEEDDQ) and 118–135 (EDDDESAGENRLEEEEEQ). 11 consecutive C2H2-type zinc fingers follow at residues 189-211 (TICPDCGESFSPGAAFLQHQRIH), 261-283 (FRCGECGKGFSRNTYLTNHLRLH), 289-311 (NLCADCGKSFSWRADLLKHRRLH), 317-339 (YPCPECGEAFSLSSHLLSHRRAH), 353-375 (FACGECGKGFVRRSHLANHQRIH), 381-403 (HGCGECGKRFSWRSDLVKHQRVH), 409-431 (YMCSECGETFSVSSHLFTHKRTH), 437-459 (YVCRECGKGFGRNSHLVNHLRVH), 465-487 (FRCGQCEKRFSDFSTLTQHQRTH), 493-515 (YTCIECGKSFIQSSHLIRHRRIH), and 521-543 (HKCAGCGKGFRYKTHLAQHQKLH).

It belongs to the krueppel C2H2-type zinc-finger protein family.

It localises to the nucleus. Functionally, RNA-interacting protein with a high number of miRNA targets. Acts as a damage-induced regulator of muscle remodeling by mediating the interferon gamma response in muscle cells. The sequence is that of Zinc finger protein 697 from Homo sapiens (Human).